The following is a 525-amino-acid chain: Endoglucanase 10 (525 aa).

Residues 1–26 form the signal peptide; that stretch reads MEEKSKSRGWCGWFIAIIVLASVILA. Asp-109 (nucleophile) is an active-site residue. Asn-259 carries an N-linked (GlcNAc...) asparagine glycan. Residue His-442 is part of the active site. 2 N-linked (GlcNAc...) asparagine glycosylation sites follow: Asn-464 and Asn-484. Active-site residues include Asp-489 and Glu-498.

This sequence belongs to the glycosyl hydrolase 9 (cellulase E) family.

The protein resides in the secreted. The enzyme catalyses Endohydrolysis of (1-&gt;4)-beta-D-glucosidic linkages in cellulose, lichenin and cereal beta-D-glucans.. This Arabidopsis thaliana (Mouse-ear cress) protein is Endoglucanase 10.